The chain runs to 100 residues: Small ribosomal subunit protein bS18 (100 aa).

Residues 1–23 (MTFIRKPAGQAKPQKYSTDAYGR) form a disordered region.

Belongs to the bacterial ribosomal protein bS18 family. In terms of assembly, part of the 30S ribosomal subunit. Forms a tight heterodimer with protein bS6.

In terms of biological role, binds as a heterodimer with protein bS6 to the central domain of the 16S rRNA, where it helps stabilize the platform of the 30S subunit. This is Small ribosomal subunit protein bS18 from Endomicrobium trichonymphae.